The primary structure comprises 838 residues: Protein P (838 aa).

The segment at 1–177 (MPLSYQHFRK…FCGSPYSWEQ (177 aa)) is terminal protein domain (TP). A spacer region spans residues 178-341 (ELQHQTSTRH…YCLTHIVNLL (164 aa)). 2 disordered regions span residues 215-238 (QSRLGLQPQQGSMARGKSGRSGSI) and 285-311 (STSKRQSSSGHAVEFHNIPPSSARSQS). Residues 285–294 (STSKRQSSSG) are compositionally biased toward polar residues. A polymerase/reverse transcriptase domain (RT) region spans residues 342-685 (EDWGPCTEHG…YLHLYPVARQ (344 aa)). A Reverse transcriptase domain is found at 352–595 (EHNIRIPRTP…YSLNFMGYVI (244 aa)). Residues Asp424, Asp546, and Asp547 each contribute to the Mg(2+) site.

This sequence belongs to the hepadnaviridae P protein family.

The enzyme catalyses DNA(n) + a 2'-deoxyribonucleoside 5'-triphosphate = DNA(n+1) + diphosphate. It catalyses the reaction Endonucleolytic cleavage to 5'-phosphomonoester.. With respect to regulation, activated by host HSP70 and HSP40 in vitro to be able to bind the epsilon loop of the pgRNA. Because deletion of the RNase H region renders the protein partly chaperone-independent, the chaperones may be needed indirectly to relieve occlusion of the RNA-binding site by this domain. Inhibited by several reverse-transcriptase inhibitors: Lamivudine, Adefovir and Entecavir. Multifunctional enzyme that converts the viral RNA genome into dsDNA in viral cytoplasmic capsids. This enzyme displays a DNA polymerase activity that can copy either DNA or RNA templates, and a ribonuclease H (RNase H) activity that cleaves the RNA strand of RNA-DNA heteroduplexes in a partially processive 3'- to 5'-endonucleasic mode. Neo-synthesized pregenomic RNA (pgRNA) are encapsidated together with the P protein, and reverse-transcribed inside the nucleocapsid. Initiation of reverse-transcription occurs first by binding the epsilon loop on the pgRNA genome, and is initiated by protein priming, thereby the 5'-end of (-)DNA is covalently linked to P protein. Partial (+)DNA is synthesized from the (-)DNA template and generates the relaxed circular DNA (RC-DNA) genome. After budding and infection, the RC-DNA migrates in the nucleus, and is converted into a plasmid-like covalently closed circular DNA (cccDNA). The activity of P protein does not seem to be necessary for cccDNA generation, and is presumably released from (+)DNA by host nuclear DNA repair machinery. In Homo sapiens (Human), this protein is Protein P.